We begin with the raw amino-acid sequence, 419 residues long: 2-amino-3-ketobutyrate coenzyme A ligase, mitochondrial (419 aa).

The transit peptide at 1-21 directs the protein to the mitochondrion; that stretch reads MWAGRVLHAALSRAPRESRAQ. Lys45 bears the N6-acetyllysine; alternate mark. Lys45 carries the post-translational modification N6-succinyllysine; alternate. 134–135 is a pyridoxal 5'-phosphate binding site; that stretch reads CF. His159 contacts substrate. Lys187 carries the post-translational modification N6-acetyllysine; alternate. An N6-succinyllysine; alternate modification is found at Lys187. Pyridoxal 5'-phosphate is bound by residues Ser206, 231–234, 262–265, and 295–296; these read DESH, TLGK, and SN. Lys265 carries the post-translational modification N6-(pyridoxal phosphate)lysine. Lys326 and Lys368 each carry N6-succinyllysine. Lys383 carries the post-translational modification N6-acetyllysine; alternate. Lys383 is modified (N6-succinyllysine; alternate). A substrate-binding site is contributed by Arg389.

This sequence belongs to the class-II pyridoxal-phosphate-dependent aminotransferase family. Requires pyridoxal 5'-phosphate as cofactor.

It is found in the mitochondrion. Its subcellular location is the nucleus. It carries out the reaction glycine + acetyl-CoA = (2S)-2-amino-3-oxobutanoate + CoA. It participates in amino-acid degradation; L-threonine degradation via oxydo-reductase pathway; glycine from L-threonine: step 2/2. Functionally, pyridoxal phosphate (PLP) dependent enzyme, which catalyzes the cleavage of 2-amino-3-oxobutanoate to glycine and acetyl-CoA. Catalyzes the second reaction step on the main metabolic degradation pathway for L-threonine. The chain is 2-amino-3-ketobutyrate coenzyme A ligase, mitochondrial (GCAT) from Bos taurus (Bovine).